The following is a 482-amino-acid chain: F-box/LRR-repeat protein At3g58930 (482 aa).

Residues 1-47 enclose the F-box domain; sequence MDRVSNLPDGVRGHILSFLPAKHIALTSVLSKSWLNLWKLIPILDID. LRR repeat units lie at residues 122–150, 175–200, 222–248, 313–344, and 345–370; these read SYED…KIRN, SDLI…RMAS, GTGC…NYSD, ILYL…GIKS, and EEGR…IIEG.

In Arabidopsis thaliana (Mouse-ear cress), this protein is F-box/LRR-repeat protein At3g58930.